The following is a 159-amino-acid chain: Secreted RxLR effector protein 50 (159 aa).

Positions 1-19 (MRSSTVLYVLGAAILAVNG) are cleaved as a signal peptide. Positions 38-54 (RWLRSNAMEHETDDEER) match the RxLR-dEER motif.

It belongs to the RxLR effector family.

The protein localises to the secreted. It is found in the host nucleus. It localises to the host cytoplasm. Functionally, secreted effector that completely suppresses the host cell death induced by cell death-inducing proteins. The polypeptide is Secreted RxLR effector protein 50 (Plasmopara viticola (Downy mildew of grapevine)).